We begin with the raw amino-acid sequence, 150 residues long: Large ribosomal subunit protein eL19 (150 aa).

The disordered stretch occupies residues Lys56 to Met89. A compositionally biased stretch (basic residues) spans Lys71–Met89.

This sequence belongs to the eukaryotic ribosomal protein eL19 family. In terms of assembly, part of the 50S ribosomal subunit.

Binds to the 23S rRNA. The polypeptide is Large ribosomal subunit protein eL19 (Thermococcus kodakarensis (strain ATCC BAA-918 / JCM 12380 / KOD1) (Pyrococcus kodakaraensis (strain KOD1))).